The primary structure comprises 903 residues: Valine--tRNA ligase (903 aa).

The segment covering 1–15 (MVCVTDQNNETTSQN) has biased composition (polar residues). The segment at 1–21 (MVCVTDQNNETTSQNRADKLP) is disordered. The 'HIGH' region motif lies at 61 to 71 (PNVTGQLHMGH). Positions 552 to 556 (KMSKS) match the 'KMSKS' region motif. Lys555 serves as a coordination point for ATP. Residues 836-903 (TVDVAAERKR…RINKRLEELA (68 aa)) adopt a coiled-coil conformation.

It belongs to the class-I aminoacyl-tRNA synthetase family. ValS type 1 subfamily. As to quaternary structure, monomer.

The protein resides in the cytoplasm. The catalysed reaction is tRNA(Val) + L-valine + ATP = L-valyl-tRNA(Val) + AMP + diphosphate. In terms of biological role, catalyzes the attachment of valine to tRNA(Val). As ValRS can inadvertently accommodate and process structurally similar amino acids such as threonine, to avoid such errors, it has a 'posttransfer' editing activity that hydrolyzes mischarged Thr-tRNA(Val) in a tRNA-dependent manner. The chain is Valine--tRNA ligase from Corynebacterium glutamicum (strain ATCC 13032 / DSM 20300 / JCM 1318 / BCRC 11384 / CCUG 27702 / LMG 3730 / NBRC 12168 / NCIMB 10025 / NRRL B-2784 / 534).